A 155-amino-acid chain; its full sequence is Small ribosomal subunit protein uS7 (155 aa).

Belongs to the universal ribosomal protein uS7 family. As to quaternary structure, part of the 30S ribosomal subunit. Contacts proteins S9 and S11.

In terms of biological role, one of the primary rRNA binding proteins, it binds directly to 16S rRNA where it nucleates assembly of the head domain of the 30S subunit. Is located at the subunit interface close to the decoding center, probably blocks exit of the E-site tRNA. This chain is Small ribosomal subunit protein uS7, found in Mesoplasma florum (strain ATCC 33453 / NBRC 100688 / NCTC 11704 / L1) (Acholeplasma florum).